The primary structure comprises 201 residues: Oligoribonuclease (201 aa).

The Exonuclease domain occupies 5 to 169; sequence MVWIDCEMTG…ADIRDSITEL (165 aa). Tyr-126 is an active-site residue.

It belongs to the oligoribonuclease family.

It localises to the cytoplasm. In terms of biological role, 3'-to-5' exoribonuclease specific for small oligoribonucleotides. The protein is Oligoribonuclease of Streptomyces griseus.